The chain runs to 106 residues: MVTTNRLVLSGTVCKTPVRKVSPSGIPHCQFVLEHRSTQQEAGFSRQTWCRMPIVVSGQQSQALTHSITVGSQLTVEGFISCHQGRNGLNKLVLHAEQIEFIDSGD.

The SSB domain occupies 4–103 (TNRLVLSGTV…LHAEQIEFID (100 aa)).

The protein belongs to the PriB family. Homodimer. Interacts with PriA and DnaT. Component of the replication restart primosome. Primosome assembly occurs via a 'hand-off' mechanism. PriA binds to replication forks, subsequently PriB then DnaT bind; DnaT then displaces ssDNA to generate the helicase loading substrate.

Its function is as follows. Involved in the restart of stalled replication forks, which reloads the replicative helicase on sites other than the origin of replication; the PriA-PriB pathway is the major replication restart pathway. During primosome assembly it facilitates complex formation between PriA and DnaT on DNA; stabilizes PriA on DNA. Stimulates the DNA unwinding activity of PriA helicase. This Yersinia pestis protein is Replication restart protein PriB.